The chain runs to 203 residues: ATP-dependent Clp protease proteolytic subunit 2 (203 aa).

Serine 98 serves as the catalytic Nucleophile. Histidine 123 is an active-site residue.

Belongs to the peptidase S14 family. In terms of assembly, fourteen ClpP subunits assemble into 2 heptameric rings which stack back to back to give a disk-like structure with a central cavity, resembling the structure of eukaryotic proteasomes.

Its subcellular location is the cytoplasm. The catalysed reaction is Hydrolysis of proteins to small peptides in the presence of ATP and magnesium. alpha-casein is the usual test substrate. In the absence of ATP, only oligopeptides shorter than five residues are hydrolyzed (such as succinyl-Leu-Tyr-|-NHMec, and Leu-Tyr-Leu-|-Tyr-Trp, in which cleavage of the -Tyr-|-Leu- and -Tyr-|-Trp bonds also occurs).. In terms of biological role, cleaves peptides in various proteins in a process that requires ATP hydrolysis. Has a chymotrypsin-like activity. Plays a major role in the degradation of misfolded proteins. This is ATP-dependent Clp protease proteolytic subunit 2 from Chlamydia pneumoniae (Chlamydophila pneumoniae).